We begin with the raw amino-acid sequence, 351 residues long: N-acetyl-gamma-glutamyl-phosphate reductase (351 aa).

The active site involves Cys-154.

This sequence belongs to the NAGSA dehydrogenase family. Type 1 subfamily.

The protein localises to the cytoplasm. The enzyme catalyses N-acetyl-L-glutamate 5-semialdehyde + phosphate + NADP(+) = N-acetyl-L-glutamyl 5-phosphate + NADPH + H(+). The protein operates within amino-acid biosynthesis; L-arginine biosynthesis; N(2)-acetyl-L-ornithine from L-glutamate: step 3/4. Functionally, catalyzes the NADPH-dependent reduction of N-acetyl-5-glutamyl phosphate to yield N-acetyl-L-glutamate 5-semialdehyde. The protein is N-acetyl-gamma-glutamyl-phosphate reductase of Prochlorococcus marinus subsp. pastoris (strain CCMP1986 / NIES-2087 / MED4).